The following is a 513-amino-acid chain: GMP synthase [glutamine-hydrolyzing] (513 aa).

Residues Thr-3–Asn-192 form the Glutamine amidotransferase type-1 domain. The active-site Nucleophile is the Cys-80. Active-site residues include His-166 and Glu-168. One can recognise a GMPS ATP-PPase domain in the interval Trp-193–Arg-388. Residue Ser-220–Ser-226 participates in ATP binding.

Homodimer.

The enzyme catalyses XMP + L-glutamine + ATP + H2O = GMP + L-glutamate + AMP + diphosphate + 2 H(+). It functions in the pathway purine metabolism; GMP biosynthesis; GMP from XMP (L-Gln route): step 1/1. Its function is as follows. Catalyzes the synthesis of GMP from XMP. In Thermosipho africanus (strain TCF52B), this protein is GMP synthase [glutamine-hydrolyzing].